Here is a 90-residue protein sequence, read N- to C-terminus: Small ribosomal subunit protein bS20 (90 aa).

Belongs to the bacterial ribosomal protein bS20 family.

Binds directly to 16S ribosomal RNA. The protein is Small ribosomal subunit protein bS20 of Mesomycoplasma hyopneumoniae (strain J / ATCC 25934 / NCTC 10110) (Mycoplasma hyopneumoniae).